Consider the following 597-residue polypeptide: MLRIAHRLDLQLRAAMDRAFPEQAAAARQASQPLDPQLAPASKPEFGDFQANGALALAKPLKQAPRQIATAIVAQLQADPAFTDLCLEPQIAGPGFINLTVRPERLAAEVSARLGDQRLGVPAVEQAAPVVVDFSSPNIAKEMHVGHLRSTIIGDSLARVLEFRGHPVLRLNHVGDWGTQFGMLITHLKQVAPDALDTADAVDLGDLVAFYREAKKRFDDDEAFQTTSREEVVKLQGGDPVSLKAWGLLCDQSRREFQKIYDRLDIRLNERGESFYNPFLPAVIDGLKDAELLVTDDGAQCVFLEGVQGKDGKPLPVIVQKSDGGFNYATTDLAAIRYRFGAAPDGDDARRVIYVTDAGQANHFAGVFQVAQRAGWIPEGARLEHVPFGLVQGEDGKKLKTRAGDTVRLRDLLDEAVERAETDLRSRLNEEERSESEEFIQHVAGTVGLAAVKYADLSQNRITNYQFSFDRMLALQGNTAPYLLYAVVRIAGIARKGGDLEVLTGQLQFSEPQEWALVRELLKFDAVIAEVEEELLPNRLCSYLFELSQVFNRFYDQVPVLKADAEALPSRLALCRLTADTLKSGLGLLGIPTLDRM.

The segment covering 23-32 has biased composition (low complexity); that stretch reads QAAAARQASQ. Residues 23 to 43 are disordered; it reads QAAAARQASQPLDPQLAPASK. The 'HIGH' region motif lies at 137–147; the sequence is PNIAKEMHVGH.

It belongs to the class-I aminoacyl-tRNA synthetase family. Monomer.

The protein localises to the cytoplasm. The catalysed reaction is tRNA(Arg) + L-arginine + ATP = L-arginyl-tRNA(Arg) + AMP + diphosphate. The chain is Arginine--tRNA ligase from Synechococcus sp. (strain WH7803).